Here is a 562-residue protein sequence, read N- to C-terminus: MNINVADLLIGNHILLLFVVLALGLCLGKLRLGSVQLGNSIGVLVVSLLLGQQHFSINTDALNLGFMLFIFCVGVEAGPNFFSIFFRDGKNYLMLAIVMVSSAMVLALGLGKLFGWDIGLTAGMLAGSMTSTPVLVGAGDTLRQTLTDGKSLSLAQDHLSLGYALTYLVGLVSLIFGARYLPKLQHQDLPTSAQQIARERGLDPDSKRKVYLPVIRAYRVGPELVAWSDGKNLRELGIYRQTGCYIERIRRNGILASPDGDAVLQPGDEISLVGYPDAHARLDPSFRNGKEVFDRDLLDMRIVNEEIVVKNNNAVNRRLSQLKLTDHGCFLNRVIRSQIEMPIDESIILNKGDVLHISGEARRVKSVADRIGFISIHSQVTDLLAFCAFFILGLMIGMITFQFSNFNFGIGNAAGLLFAGIMLGFLRANHPTFGYIPQGALTMVKEFGLMVFMAGVGLSAGSGITKGLGETGLLMLGAGLIVSLVPVVICFLFGAWVLKMNRALLFGAIMGARTCAPAMEIISDTARSNIPALGYAGTYAIANVLLTLAGTLIVIIWPILGG.

5 helical membrane-spanning segments follow: residues 8–28, 32–52, 66–86, 94–114, and 158–178; these read LLIGNHILLLFVVLALGLCLG, LGSVQLGNSIGVLVVSLLLGQ, FMLFIFCVGVEAGPNFFSIFF, MLAIVMVSSAMVLALGLGKLF, and HLSLGYALTYLVGLVSLIFGA. RCK C-terminal domains lie at 202–288 and 290–373; these read LDPD…SFRN and KEVF…RIGF. Transmembrane regions (helical) follow at residues 383-403, 406-426, 440-460, 473-493, 503-523, and 540-560; these read LLAFCAFFILGLMIGMITFQF, FNFGIGNAAGLLFAGIMLGFL, ALTMVKEFGLMVFMAGVGLSA, LLMLGAGLIVSLVPVVICFLF, ALLFGAIMGARTCAPAMEIIS, and AIANVLLTLAGTLIVIIWPIL.

This sequence belongs to the AAE transporter (TC 2.A.81) family. YbjL subfamily.

Its subcellular location is the cell membrane. This Erwinia tasmaniensis (strain DSM 17950 / CFBP 7177 / CIP 109463 / NCPPB 4357 / Et1/99) protein is Putative transport protein ETA_21820.